The sequence spans 321 residues: MAEAALAGQLPDAQSGLRLLTDPGIELLPLLQAAFRVRFHHFGRGVRIHILNNVQNGYCSEDCNYCAQAKNSKAPIEKYSIKSDEEILEGARKAYESGAYRYCMVSSGRSPHAERIDHMSKLIREIKSRWPVEVCLSAGFLDANKARELKEAGLDRYNHNLNTADGYYGSICTTHSYGDRLNTLQEARRAGLEVCSGIIIGMGEKPEEIVEVATTLRSLQARSIPVNFYVHVEGAQLGAVDQLTPAYALRALALFRFFNPDAEVRAAGGRESNLRGMESMALYPANSLFAEGYLNTTGHMAEKTVKMVEDAGFFVEKIEEE.

One can recognise a Radical SAM core domain in the interval 44–270 (RGVRIHILNN…DAEVRAAGGR (227 aa)). Positions 59, 63, and 66 each coordinate [4Fe-4S] cluster. [2Fe-2S] cluster-binding residues include cysteine 103, cysteine 135, cysteine 195, and arginine 265.

Belongs to the radical SAM superfamily. Biotin synthase family. In terms of assembly, homodimer. Requires [4Fe-4S] cluster as cofactor. [2Fe-2S] cluster is required as a cofactor.

It carries out the reaction (4R,5S)-dethiobiotin + (sulfur carrier)-SH + 2 reduced [2Fe-2S]-[ferredoxin] + 2 S-adenosyl-L-methionine = (sulfur carrier)-H + biotin + 2 5'-deoxyadenosine + 2 L-methionine + 2 oxidized [2Fe-2S]-[ferredoxin]. The protein operates within cofactor biosynthesis; biotin biosynthesis; biotin from 7,8-diaminononanoate: step 2/2. In terms of biological role, catalyzes the conversion of dethiobiotin (DTB) to biotin by the insertion of a sulfur atom into dethiobiotin via a radical-based mechanism. The sequence is that of Biotin synthase from Magnetococcus marinus (strain ATCC BAA-1437 / JCM 17883 / MC-1).